A 200-amino-acid polypeptide reads, in one-letter code: Translation machinery-associated protein 22 (200 aa).

The 72-residue stretch at 106–177 (VQIKRVERNK…DVLEWLVEVH (72 aa)) folds into the SUI1 domain.

This sequence belongs to the DENR family. Interacts with the 40S ribosomal subunit.

The protein resides in the cytoplasm. The sequence is that of Translation machinery-associated protein 22 (TMA22) from Coccidioides immitis (strain RS) (Valley fever fungus).